A 433-amino-acid chain; its full sequence is Ribonuclease T2-like (433 aa).

4 cysteine pairs are disulfide-bonded: C28–C47, C36–C95, C46–C171, and C103–C163. N-linked (GlcNAc...) asparagine glycosylation is found at N38 and N71. Active-site residues include H88, E156, and H160. N-linked (GlcNAc...) asparagine glycans are attached at residues N221 and N263. Cysteines 247 and 283 form a disulfide.

Belongs to the RNase T2 family.

Its subcellular location is the vacuole lumen. The protein resides in the cytoplasm. The catalysed reaction is a ribonucleotidyl-ribonucleotide-RNA + H2O = a 3'-end 3'-phospho-ribonucleotide-RNA + a 5'-end dephospho-ribonucleoside-RNA + H(+). Its function is as follows. Rnase which modulates cell survival under stress conditions. Released from the vacuole to the cytoplasm during stress to promote tRNA and rRNA cleavage and to activate separately a downstream pathway that promotes cell death. Involved in cell size, vacuolar morphology and growth at high temperatures and high salt concentration. This is Ribonuclease T2-like (RNY1) from Candida glabrata (strain ATCC 2001 / BCRC 20586 / JCM 3761 / NBRC 0622 / NRRL Y-65 / CBS 138) (Yeast).